The following is a 315-amino-acid chain: Ribosomal RNA small subunit methyltransferase H (315 aa).

S-adenosyl-L-methionine is bound by residues 37-39, D57, F83, D105, and Q112; that span reads GGH.

It belongs to the methyltransferase superfamily. RsmH family.

Its subcellular location is the cytoplasm. It catalyses the reaction cytidine(1402) in 16S rRNA + S-adenosyl-L-methionine = N(4)-methylcytidine(1402) in 16S rRNA + S-adenosyl-L-homocysteine + H(+). Its function is as follows. Specifically methylates the N4 position of cytidine in position 1402 (C1402) of 16S rRNA. The polypeptide is Ribosomal RNA small subunit methyltransferase H (Pseudomonas putida (strain ATCC 47054 / DSM 6125 / CFBP 8728 / NCIMB 11950 / KT2440)).